Consider the following 250-residue polypeptide: Gamma-secretase subunit APH1-like (250 aa).

7 helical membrane-spanning segments follow: residues 5–25, 29–49, 57–77, 116–136, 157–177, 191–211, and 212–232; these read AGIG…VSVI, PFLI…LIIL, LPLK…SVCF, IALA…CLSL, FLIS…SMVI, IIVP…FASE, and GCVI…VHCG.

Belongs to the APH-1 family. Probable component of the gamma-secretase complex, a complex composed of a presenilin homodimer, nicastrin, APH1 and PEN2.

The protein resides in the membrane. In terms of biological role, probable subunit of the gamma-secretase complex, an endoprotease complex that catalyzes the intramembrane cleavage of integral proteins such as Notch receptors. The polypeptide is Gamma-secretase subunit APH1-like (Arabidopsis thaliana (Mouse-ear cress)).